We begin with the raw amino-acid sequence, 264 residues long: 4-hydroxy-tetrahydrodipicolinate reductase (264 aa).

Position 8-13 (8-13 (GPRGKM)) interacts with NAD(+). Position 36 (Lys36) interacts with NADP(+). Residues 97–99 (GTT) and 123–126 (APNF) each bind NAD(+). His153 functions as the Proton donor/acceptor in the catalytic mechanism. His154 serves as a coordination point for (S)-2,3,4,5-tetrahydrodipicolinate. The Proton donor role is filled by Lys157. 163–164 (GT) serves as a coordination point for (S)-2,3,4,5-tetrahydrodipicolinate.

It belongs to the DapB family.

It localises to the cytoplasm. The enzyme catalyses (S)-2,3,4,5-tetrahydrodipicolinate + NAD(+) + H2O = (2S,4S)-4-hydroxy-2,3,4,5-tetrahydrodipicolinate + NADH + H(+). It carries out the reaction (S)-2,3,4,5-tetrahydrodipicolinate + NADP(+) + H2O = (2S,4S)-4-hydroxy-2,3,4,5-tetrahydrodipicolinate + NADPH + H(+). The protein operates within amino-acid biosynthesis; L-lysine biosynthesis via DAP pathway; (S)-tetrahydrodipicolinate from L-aspartate: step 4/4. Functionally, catalyzes the conversion of 4-hydroxy-tetrahydrodipicolinate (HTPA) to tetrahydrodipicolinate. The polypeptide is 4-hydroxy-tetrahydrodipicolinate reductase (Halalkalibacterium halodurans (strain ATCC BAA-125 / DSM 18197 / FERM 7344 / JCM 9153 / C-125) (Bacillus halodurans)).